A 211-amino-acid chain; its full sequence is MDHKGTDPGFMNPVAGFGVTFKAMFKKRLTEQYPEQQKTTAPRFHGRHQLNRHPDGLEKCVGCELCAWACPADAIYVEGADNTDEERYSPGERYGRVYQINYARCILCGLCIEACPTRALTMTNEFELADSSRANLIFTKEQLLAGLEEGMVDSPHAIYPGTDEQDYYRGLVTEAAPGTVQQVAHSKGEVVQEGDSTFGATEPASEEVIRR.

2 consecutive 4Fe-4S ferredoxin-type domains span residues 50–80 and 96–125; these read LNRH…VEGA and RVYQ…MTNE. [4Fe-4S] cluster contacts are provided by Cys60, Cys63, Cys66, Cys70, Cys105, Cys108, Cys111, and Cys115. The disordered stretch occupies residues 192–211; it reads QEGDSTFGATEPASEEVIRR.

It belongs to the complex I 23 kDa subunit family. NDH-1 is composed of 14 different subunits. Subunits NuoA, H, J, K, L, M, N constitute the membrane sector of the complex. [4Fe-4S] cluster serves as cofactor.

The protein resides in the cell membrane. It carries out the reaction a quinone + NADH + 5 H(+)(in) = a quinol + NAD(+) + 4 H(+)(out). Its function is as follows. NDH-1 shuttles electrons from NADH, via FMN and iron-sulfur (Fe-S) centers, to quinones in the respiratory chain. The immediate electron acceptor for the enzyme in this species is believed to be ubiquinone. Couples the redox reaction to proton translocation (for every two electrons transferred, four hydrogen ions are translocated across the cytoplasmic membrane), and thus conserves the redox energy in a proton gradient. This Streptomyces coelicolor (strain ATCC BAA-471 / A3(2) / M145) protein is NADH-quinone oxidoreductase subunit I 1.